A 235-amino-acid chain; its full sequence is 2-C-methyl-D-erythritol 4-phosphate cytidylyltransferase (235 aa).

The protein belongs to the IspD/TarI cytidylyltransferase family. IspD subfamily.

The catalysed reaction is 2-C-methyl-D-erythritol 4-phosphate + CTP + H(+) = 4-CDP-2-C-methyl-D-erythritol + diphosphate. It functions in the pathway isoprenoid biosynthesis; isopentenyl diphosphate biosynthesis via DXP pathway; isopentenyl diphosphate from 1-deoxy-D-xylulose 5-phosphate: step 2/6. Functionally, catalyzes the formation of 4-diphosphocytidyl-2-C-methyl-D-erythritol from CTP and 2-C-methyl-D-erythritol 4-phosphate (MEP). This Pseudomonas putida (strain ATCC 47054 / DSM 6125 / CFBP 8728 / NCIMB 11950 / KT2440) protein is 2-C-methyl-D-erythritol 4-phosphate cytidylyltransferase.